A 77-amino-acid chain; its full sequence is U8-lycotoxin-Ls1m (77 aa).

Residues 1–20 form the signal peptide; it reads MKLMIFTGLFLFAIVSLIEA. Residues 21–26 constitute a propeptide that is removed on maturation; sequence QAENEK.

This sequence belongs to the neurotoxin 19 (CSTX) family. 08 (U8-Lctx) subfamily. Contains 4 disulfide bonds. As to expression, expressed by the venom gland.

It localises to the secreted. The protein is U8-lycotoxin-Ls1m of Lycosa singoriensis (Wolf spider).